Reading from the N-terminus, the 407-residue chain is Peptidase T (407 aa).

A Zn(2+)-binding site is contributed by H82. D84 is a catalytic residue. D143 contributes to the Zn(2+) binding site. The active-site Proton acceptor is the E177. Residues E178, D200, and H382 each coordinate Zn(2+).

Belongs to the peptidase M20B family. It depends on Zn(2+) as a cofactor.

It localises to the cytoplasm. The catalysed reaction is Release of the N-terminal residue from a tripeptide.. Cleaves the N-terminal amino acid of tripeptides. In Streptococcus thermophilus (strain ATCC BAA-491 / LMD-9), this protein is Peptidase T.